The chain runs to 239 residues: Uracil-DNA glycosylase (239 aa).

D65 serves as the catalytic Proton acceptor.

Belongs to the uracil-DNA glycosylase (UDG) superfamily. UNG family.

The protein resides in the cytoplasm. It catalyses the reaction Hydrolyzes single-stranded DNA or mismatched double-stranded DNA and polynucleotides, releasing free uracil.. Functionally, excises uracil residues from the DNA which can arise as a result of misincorporation of dUMP residues by DNA polymerase or due to deamination of cytosine. The chain is Uracil-DNA glycosylase from Levilactobacillus brevis (strain ATCC 367 / BCRC 12310 / CIP 105137 / JCM 1170 / LMG 11437 / NCIMB 947 / NCTC 947) (Lactobacillus brevis).